The sequence spans 114 residues: DNA-binding protein rrnAC3180 (114 aa).

Positions 1–11 are enriched in acidic residues; the sequence is MSGDPSEEELE. Residues 1-45 form a disordered region; that stretch reads MSGDPSEEELEELRKKKMEQLKEQQGGEGEGQEAAQQQAEAQKQA. Over residues 12 to 22 the composition is skewed to basic and acidic residues; that stretch reads ELRKKKMEQLK. Low complexity predominate over residues 32-45; that stretch reads QEAAQQQAEAQKQA.

Belongs to the PDCD5 family.

In Haloarcula marismortui (strain ATCC 43049 / DSM 3752 / JCM 8966 / VKM B-1809) (Halobacterium marismortui), this protein is DNA-binding protein rrnAC3180.